Reading from the N-terminus, the 200-residue chain is Probable fatty acid desaturase MIMI_L630 (200 aa).

2 consecutive transmembrane segments (helical) span residues 9–29 (FIQI…YHWI) and 79–99 (IGPL…FIMI).

It belongs to the fatty acid desaturase CarF family.

It localises to the membrane. The sequence is that of Probable fatty acid desaturase MIMI_L630 from Acanthamoeba polyphaga mimivirus (APMV).